A 447-amino-acid polypeptide reads, in one-letter code: Tubulin beta-1 chain (447 aa).

Position 11 (Q11) interacts with GTP. S40 is modified (phosphoserine). 7 residues coordinate GTP: E69, S138, G142, T143, G144, N204, and N226. E69 provides a ligand contact to Mg(2+). S339 carries the phosphoserine modification. The disordered stretch occupies residues 427–447; that stretch reads EATADEDAEFEEEQEAEVDEN. The span at 429–447 shows a compositional bias: acidic residues; it reads TADEDAEFEEEQEAEVDEN.

Belongs to the tubulin family. As to quaternary structure, dimer of alpha and beta chains. A typical microtubule is a hollow water-filled tube with an outer diameter of 25 nm and an inner diameter of 15 nM. Alpha-beta heterodimers associate head-to-tail to form protofilaments running lengthwise along the microtubule wall with the beta-tubulin subunit facing the microtubule plus end conferring a structural polarity. Microtubules usually have 13 protofilaments but different protofilament numbers can be found in some organisms and specialized cells. Interacts with mgr and Vhl. Mg(2+) serves as cofactor.

It is found in the cytoplasm. Its subcellular location is the cytoskeleton. In terms of biological role, tubulin is the major constituent of microtubules, a cylinder consisting of laterally associated linear protofilaments composed of alpha- and beta-tubulin heterodimers. Microtubules grow by the addition of GTP-tubulin dimers to the microtubule end, where a stabilizing cap forms. Below the cap, tubulin dimers are in GDP-bound state, owing to GTPase activity of alpha-tubulin. The protein is Tubulin beta-1 chain (betaTub56D) of Drosophila melanogaster (Fruit fly).